The chain runs to 78 residues: Beta-defensin 105A (78 aa).

The signal sequence occupies residues 1–27 (MALIKKTFFFLFAMFFILVQLSSGCQA). 3 disulfide bridges follow: cysteine 43/cysteine 74, cysteine 53/cysteine 67, and cysteine 57/cysteine 73.

It belongs to the beta-defensin family.

It localises to the secreted. Has antimicrobial activity. The sequence is that of Beta-defensin 105A (DEFB105A) from Pan troglodytes (Chimpanzee).